A 529-amino-acid polypeptide reads, in one-letter code: All-trans-zeta-carotene desaturase (529 aa).

12–45 is a binding site for FAD; it reads IVVGAGPGGLSAAINLAGQGFRVTVVEKDAVPGG.

Belongs to the carotenoid/retinoid oxidoreductase family. FAD serves as cofactor.

It catalyses the reaction all-trans-zeta-carotene + 2 A = all-trans-lycopene + 2 AH2. The protein operates within carotenoid biosynthesis; lycopene biosynthesis. Dehydrogenates carotenes in the trans conformation: converts all-trans-zeta-carotene into all-trans-lycopene, one of the last dehydrogenation steps of lycopene biosynthesis. The polypeptide is All-trans-zeta-carotene desaturase (carC) (Myxococcus xanthus).